Consider the following 599-residue polypeptide: Sulfite reductase [NADPH] flavoprotein alpha-component (599 aa).

In terms of domain architecture, Flavodoxin-like spans 64–202 (ITLISASQTG…AAAEWRARVV (139 aa)). FMN-binding positions include 70-75 (SQTGNA), 117-120 (STQG), and 153-162 (LGDTSYEFFC). An FAD-binding FR-type domain is found at 234 to 448 (EAPLTATLSV…IEHNDNFRLP (215 aa)). FAD contacts are provided by residues threonine 322, alanine 356, 386-389 (RLYS), 404-406 (TVG), tyrosine 410, and 419-422 (GGAS). Residues 519 to 520 (SR), 525 to 529 (KIYVQ), and aspartate 561 each bind NADP(+). Residue tyrosine 599 participates in FAD binding.

This sequence belongs to the NADPH-dependent sulphite reductase flavoprotein subunit CysJ family. It in the N-terminal section; belongs to the flavodoxin family. The protein in the C-terminal section; belongs to the flavoprotein pyridine nucleotide cytochrome reductase family. Alpha(8)-beta(8). The alpha component is a flavoprotein, the beta component is a hemoprotein. It depends on FAD as a cofactor. FMN serves as cofactor.

It carries out the reaction hydrogen sulfide + 3 NADP(+) + 3 H2O = sulfite + 3 NADPH + 4 H(+). It functions in the pathway sulfur metabolism; hydrogen sulfide biosynthesis; hydrogen sulfide from sulfite (NADPH route): step 1/1. Functionally, component of the sulfite reductase complex that catalyzes the 6-electron reduction of sulfite to sulfide. This is one of several activities required for the biosynthesis of L-cysteine from sulfate. The flavoprotein component catalyzes the electron flow from NADPH -&gt; FAD -&gt; FMN to the hemoprotein component. This is Sulfite reductase [NADPH] flavoprotein alpha-component from Klebsiella pneumoniae subsp. pneumoniae (strain ATCC 700721 / MGH 78578).